A 376-amino-acid chain; its full sequence is MKWLVLLGLVALSECIVILPLKKMKTLRETLREKNLLNNFLEEQAYRLSKNDSKITIHPLRNYLDTAYVGNITIGTPPQEFRVVFDTGSANLWVPCITCTSPACYTHKTFNPQNSSSFREVGSPITIFYGSGIIQGFLGSDTVRIGNLVSPEQSFGLSLEEYGFDSLPFDGILGLAFPAMGIEDTIPIFDNLWSHGAFSEPVFAFYLNTNKPEGSVVMFGGVDHRYYKGELNWIPVSQTSHWQISMNNISMNGTVTACSCGCEALLDTGTSMIYGPTKLVTNIHKLMNARLENSEYVVSCDAVKTLPPVIFNINGIDYPLRPQAYIIKIQNSCRSVFQGGTENSSLNTWILGDIFLRQYFSVFDRKNRRIGLAPAV.

A signal peptide spans 1 to 15 (MKWLVLLGLVALSEC). N-linked (GlcNAc...) asparagine glycosylation is found at N51 and N71. Residues 68-373 (YVGNITIGTP…DRKNRRIGLA (306 aa)) enclose the Peptidase A1 domain. The active site involves D86. An intrachain disulfide couples C99 to C104. N-linked (GlcNAc...) asparagine glycosylation is found at N114, N248, and N252. A disulfide bridge connects residues C258 and C262. Residue D267 is part of the active site. Cysteines 300 and 333 form a disulfide. The N-linked (GlcNAc...) asparagine glycan is linked to N343.

It belongs to the peptidase A1 family. In terms of processing, N-Glycosylated; the glycans terminate in either N-acetyl-galactosamine (GalNAc) or N-acetyllactosamine. Terminal GalNAc on Asn-linked glycans is greatly reduced prior to parturition while lactosamine-type N-glycans remain unaltered. As to expression, trophoblast and placental tissue. Localized to both the mononucleate and binucleate cells of the trophectoderm.

It localises to the secreted. It is found in the extracellular space. PAG2 or a processed derivative of this molecule might represent a factor that binds the LH receptor. This is Pregnancy-associated glycoprotein 2 (PAG2) from Bos taurus (Bovine).